We begin with the raw amino-acid sequence, 272 residues long: MQTTDLVRFKKLGKQITVLTAWDAISSSIVEAAGADVVLVGDSLGMVVLGHSTTLPVTLDQMLHHTKAVCRGFCRPLSKQPLVVCDLPFLSYQCGEDKAVEAAGTLLKNSTASAVKLEGAEPETLLVIKRLIRMGIPVMGHLGLTPQSVHQLGYKSQARDKDSQEKIFKDSKMLQESGCFAIVLEHIPAEIASRLKKHIDIPVIGIGAGSDCDGQVRVTADILGLSIAQPPFAKPLLAGRELCINALKEWINSTDLDQVNPTTKTSESKSDC.

The Mg(2+) site is built by Asp42 and Asp86. 3-methyl-2-oxobutanoate-binding positions include 42–43 (DS), Asp86, and Lys116. Glu118 contacts Mg(2+). Glu185 serves as the catalytic Proton acceptor.

It belongs to the PanB family. In terms of assembly, homodecamer; pentamer of dimers. The cofactor is Mg(2+).

Its subcellular location is the cytoplasm. The catalysed reaction is 3-methyl-2-oxobutanoate + (6R)-5,10-methylene-5,6,7,8-tetrahydrofolate + H2O = 2-dehydropantoate + (6S)-5,6,7,8-tetrahydrofolate. Its pathway is cofactor biosynthesis; (R)-pantothenate biosynthesis; (R)-pantoate from 3-methyl-2-oxobutanoate: step 1/2. Its function is as follows. Catalyzes the reversible reaction in which hydroxymethyl group from 5,10-methylenetetrahydrofolate is transferred onto alpha-ketoisovalerate to form ketopantoate. The polypeptide is 3-methyl-2-oxobutanoate hydroxymethyltransferase (Prochlorococcus marinus (strain NATL1A)).